Reading from the N-terminus, the 663-residue chain is Bicarbonate transport ATP-binding protein CmpC (663 aa).

The 235-residue stretch at 5-239 (VAVENIEKSF…RPRKRMDVVH (235 aa)) folds into the ABC transporter domain. Position 42-49 (42-49 (GHSGCGKS)) interacts with ATP. Residues 281-663 (LEIGYVPLMA…LDQPRPIAAA (383 aa)) form a cmpA-like region.

Belongs to the ABC transporter superfamily. Nitrate/nitrite/cyanate uptake transporter (NitT) (TC 3.A.1.16) family. The complex is composed of two ATP-binding proteins (CmpC and CmpD), a transmembrane protein (CmpB) and a solute-binding protein (CmpA).

Its subcellular location is the cell inner membrane. Functionally, part of the ABC transporter complex CmpABCD involved in bicarbonate transport. Responsible for energy coupling to the transport system. The protein is Bicarbonate transport ATP-binding protein CmpC (cmpC) of Synechococcus elongatus (strain ATCC 33912 / PCC 7942 / FACHB-805) (Anacystis nidulans R2).